We begin with the raw amino-acid sequence, 361 residues long: Probable dual-specificity RNA methyltransferase RlmN (361 aa).

Residue Glu91 is the Proton acceptor of the active site. In terms of domain architecture, Radical SAM core spans 97-335; sequence QHYGLSVCVT…CVVRQEHGTD (239 aa). Cys104 and Cys340 are joined by a disulfide. Cys111, Cys115, and Cys118 together coordinate [4Fe-4S] cluster. S-adenosyl-L-methionine contacts are provided by residues 163 to 164, Ser195, 218 to 220, and Asn296; these read GE and SLH. The active-site S-methylcysteine intermediate is the Cys340.

This sequence belongs to the radical SAM superfamily. RlmN family. It depends on [4Fe-4S] cluster as a cofactor.

Its subcellular location is the cytoplasm. The enzyme catalyses adenosine(2503) in 23S rRNA + 2 reduced [2Fe-2S]-[ferredoxin] + 2 S-adenosyl-L-methionine = 2-methyladenosine(2503) in 23S rRNA + 5'-deoxyadenosine + L-methionine + 2 oxidized [2Fe-2S]-[ferredoxin] + S-adenosyl-L-homocysteine. It catalyses the reaction adenosine(37) in tRNA + 2 reduced [2Fe-2S]-[ferredoxin] + 2 S-adenosyl-L-methionine = 2-methyladenosine(37) in tRNA + 5'-deoxyadenosine + L-methionine + 2 oxidized [2Fe-2S]-[ferredoxin] + S-adenosyl-L-homocysteine. Specifically methylates position 2 of adenine 2503 in 23S rRNA and position 2 of adenine 37 in tRNAs. The chain is Probable dual-specificity RNA methyltransferase RlmN from Streptococcus mutans serotype c (strain ATCC 700610 / UA159).